We begin with the raw amino-acid sequence, 157 residues long: ATP synthase subunit b (157 aa).

A helical transmembrane segment spans residues 7–29 (LISQAIAFSLFILFTARFVWPYL).

The protein belongs to the ATPase B chain family. F-type ATPases have 2 components, F(1) - the catalytic core - and F(0) - the membrane proton channel. F(1) has five subunits: alpha(3), beta(3), gamma(1), delta(1), epsilon(1). F(0) has three main subunits: a(1), b(2) and c(10-14). The alpha and beta chains form an alternating ring which encloses part of the gamma chain. F(1) is attached to F(0) by a central stalk formed by the gamma and epsilon chains, while a peripheral stalk is formed by the delta and b chains.

Its subcellular location is the cell inner membrane. Functionally, f(1)F(0) ATP synthase produces ATP from ADP in the presence of a proton or sodium gradient. F-type ATPases consist of two structural domains, F(1) containing the extramembraneous catalytic core and F(0) containing the membrane proton channel, linked together by a central stalk and a peripheral stalk. During catalysis, ATP synthesis in the catalytic domain of F(1) is coupled via a rotary mechanism of the central stalk subunits to proton translocation. In terms of biological role, component of the F(0) channel, it forms part of the peripheral stalk, linking F(1) to F(0). The protein is ATP synthase subunit b of Nitrosomonas europaea (strain ATCC 19718 / CIP 103999 / KCTC 2705 / NBRC 14298).